A 146-amino-acid polypeptide reads, in one-letter code: Hemoglobin subunit beta (146 aa).

Val1 bears the N-acetylvaline mark. A Globin domain is found at 2–146 (HLTGEEKAAV…VANALAHKYH (145 aa)). At Thr12 the chain carries Phosphothreonine. At Ser44 the chain carries Phosphoserine. Lys59 bears the N6-acetyllysine mark. Heme b is bound at residue His63. Lys82 is modified (N6-acetyllysine). His92 contacts heme b. Cys93 bears the S-nitrosocysteine mark. Residue Lys144 is modified to N6-acetyllysine.

It belongs to the globin family. In terms of assembly, heterotetramer of two alpha chains and two beta chains. As to expression, red blood cells.

Involved in oxygen transport from the lung to the various peripheral tissues. This chain is Hemoglobin subunit beta (HBB), found in Aotus trivirgatus (Three-striped night monkey).